A 273-amino-acid chain; its full sequence is SKA complex subunit 1 homolog (273 aa).

Residues 77–97 (KKLVQRSLKEEEKLQHMLANL) adopt a coiled-coil conformation.

It belongs to the SKA1 family.

This is SKA complex subunit 1 homolog from Zea mays (Maize).